Here is a 151-residue protein sequence, read N- to C-terminus: CD-NTase-associated protein 19 (151 aa).

3 helical membrane-spanning segments follow: residues 25-45, 52-72, and 127-147; these read TVFNFYIAITGLLAAGIGVTL, VLFTSLMGVFVAFISFIFWKL, and ISFVIVGFTGILLAITPFLMK.

This sequence belongs to the Cap19 family.

The protein resides in the cell inner membrane. In terms of biological role, membrane protein component of a CBASS (cyclic oligonucleotide-based antiphage signaling system) which provides immunity against bacteriophage. The CD-NTase protein synthesizes cyclic nucleotides in response to infection; these serve as specific second messenger signals. The signals activate a diverse range of effectors, leading to bacterial cell death and thus abortive phage infection. A type III CBASS system. Expression of this CBASS system (Cap17-CapW-CdnC-Cap7-Cap6-Cap18-Cap19) in a susceptible E.coli (strain JP313) confers resistance to bacteriophage lambda cI-. In Escherichia coli, this protein is CD-NTase-associated protein 19.